Consider the following 130-residue polypeptide: Flagellar assembly factor FliW (130 aa).

The protein belongs to the FliW family. In terms of assembly, interacts with translational regulator CsrA and flagellin(s).

It is found in the cytoplasm. Functionally, acts as an anti-CsrA protein, binds CsrA and prevents it from repressing translation of its target genes, one of which is flagellin. Binds to flagellin and participates in the assembly of the flagellum. The protein is Flagellar assembly factor FliW of Borrelia hermsii (strain HS1 / DAH).